The primary structure comprises 313 residues: Putative S-adenosyl-L-methionine-dependent methyltransferase MAV_5150 (313 aa).

Residues aspartate 139 and 168–169 (DL) contribute to the S-adenosyl-L-methionine site.

The protein belongs to the UPF0677 family.

In terms of biological role, exhibits S-adenosyl-L-methionine-dependent methyltransferase activity. The chain is Putative S-adenosyl-L-methionine-dependent methyltransferase MAV_5150 from Mycobacterium avium (strain 104).